The sequence spans 205 residues: ATP phosphoribosyltransferase (205 aa).

It belongs to the ATP phosphoribosyltransferase family. Short subfamily. As to quaternary structure, heteromultimer composed of HisG and HisZ subunits.

It is found in the cytoplasm. It carries out the reaction 1-(5-phospho-beta-D-ribosyl)-ATP + diphosphate = 5-phospho-alpha-D-ribose 1-diphosphate + ATP. It participates in amino-acid biosynthesis; L-histidine biosynthesis; L-histidine from 5-phospho-alpha-D-ribose 1-diphosphate: step 1/9. Functionally, catalyzes the condensation of ATP and 5-phosphoribose 1-diphosphate to form N'-(5'-phosphoribosyl)-ATP (PR-ATP). Has a crucial role in the pathway because the rate of histidine biosynthesis seems to be controlled primarily by regulation of HisG enzymatic activity. The protein is ATP phosphoribosyltransferase of Leptospira borgpetersenii serovar Hardjo-bovis (strain JB197).